The primary structure comprises 520 residues: Cholesterol side-chain cleavage enzyme, mitochondrial (520 aa).

Residues 1–36 constitute a mitochondrion transit peptide; the sequence is MLAKGLSLRSVLAKGCQPFLSPTWQSSVLATGGGAN. A heme-binding site is contributed by Cys458.

It belongs to the cytochrome P450 family. Interacts with FDX1/adrenodoxin. Requires heme as cofactor.

The protein localises to the mitochondrion inner membrane. It carries out the reaction 6 reduced [adrenodoxin] + cholesterol + 3 O2 + 6 H(+) = 4-methylpentanal + pregnenolone + 6 oxidized [adrenodoxin] + 4 H2O. The catalysed reaction is 2 reduced [adrenodoxin] + cholesterol + O2 + 2 H(+) = (22R)-hydroxycholesterol + 2 oxidized [adrenodoxin] + H2O. It catalyses the reaction (22R)-hydroxycholesterol + 2 reduced [adrenodoxin] + O2 + 2 H(+) = (20R,22R)-20,22-dihydroxycholesterol + 2 oxidized [adrenodoxin] + H2O. The enzyme catalyses (20R,22R)-20,22-dihydroxycholesterol + 2 reduced [adrenodoxin] + O2 + 2 H(+) = 4-methylpentanal + pregnenolone + 2 oxidized [adrenodoxin] + 2 H2O. It functions in the pathway lipid metabolism; C21-steroid hormone metabolism. It participates in steroid metabolism; cholesterol metabolism. In terms of biological role, a cytochrome P450 monooxygenase that catalyzes the side-chain hydroxylation and cleavage of cholesterol to pregnenolone, the precursor of most steroid hormones. Catalyzes three sequential oxidation reactions of cholesterol, namely the hydroxylation at C22 followed with the hydroxylation at C20 to yield 20R,22R-hydroxycholesterol that is further cleaved between C20 and C22 to yield the C21-steroid pregnenolone and 4-methylpentanal. Mechanistically, uses molecular oxygen inserting one oxygen atom into a substrate and reducing the second into a water molecule. Two electrons are provided by NADPH via a two-protein mitochondrial transfer system comprising flavoprotein FDXR (adrenodoxin/ferredoxin reductase) and nonheme iron-sulfur protein FDX1 or FDX2 (adrenodoxin/ferredoxin). This Mesocricetus auratus (Golden hamster) protein is Cholesterol side-chain cleavage enzyme, mitochondrial (CYP11A1).